The chain runs to 296 residues: GTP-binding protein GEM (296 aa).

2 disordered regions span residues 1 to 20 and 37 to 68; these read MTLN…PQQQ and PHQY…SVIS. The segment covering 57–68 has biased composition (low complexity); it reads SWSSDSTDSVIS. GTP contacts are provided by residues 82–89 and 191–194; these read GEQGVGKS and NKSD. Residues 266–285 form a calmodulin-binding region; it reads ARRFWGKIVAKNNKNMAFKL.

The protein belongs to the small GTPase superfamily. RGK family. Interacts with calmodulin in a Ca(2+)-dependent manner. Binds ROCK1. Phosphorylated on tyrosine residues. In terms of tissue distribution, most abundant in thymus, spleen, kidney, lung, and testis. Less abundant in heart, brain, liver and skeletal muscle.

Its subcellular location is the cell membrane. In terms of biological role, could be a regulatory protein, possibly participating in receptor-mediated signal transduction at the plasma membrane. Has guanine nucleotide-binding activity but undetectable intrinsic GTPase activity. This is GTP-binding protein GEM (GEM) from Homo sapiens (Human).